Here is a 36-residue protein sequence, read N- to C-terminus: Probable non-specific lipid-transfer protein (36 aa).

It belongs to the plant LTP family. In terms of processing, phosphorylated by Ca(2+)-dependent protein kinase.

Plant non-specific lipid-transfer proteins transfer phospholipids as well as galactolipids across membranes. May play a role in wax or cutin deposition in the cell walls of expanding epidermal cells and certain secretory tissues. This is Probable non-specific lipid-transfer protein from Pinus pinea (Italian stone pine).